The following is a 356-amino-acid chain: UDP-N-acetylglucosamine--N-acetylmuramyl-(pentapeptide) pyrophosphoryl-undecaprenol N-acetylglucosamine transferase (356 aa).

Residues 11 to 13 (TAG), N123, R159, and S192 each bind UDP-N-acetyl-alpha-D-glucosamine.

This sequence belongs to the glycosyltransferase 28 family. MurG subfamily.

It localises to the cell membrane. The catalysed reaction is di-trans,octa-cis-undecaprenyl diphospho-N-acetyl-alpha-D-muramoyl-L-alanyl-D-glutamyl-meso-2,6-diaminopimeloyl-D-alanyl-D-alanine + UDP-N-acetyl-alpha-D-glucosamine = di-trans,octa-cis-undecaprenyl diphospho-[N-acetyl-alpha-D-glucosaminyl-(1-&gt;4)]-N-acetyl-alpha-D-muramoyl-L-alanyl-D-glutamyl-meso-2,6-diaminopimeloyl-D-alanyl-D-alanine + UDP + H(+). It functions in the pathway cell wall biogenesis; peptidoglycan biosynthesis. Cell wall formation. Catalyzes the transfer of a GlcNAc subunit on undecaprenyl-pyrophosphoryl-MurNAc-pentapeptide (lipid intermediate I) to form undecaprenyl-pyrophosphoryl-MurNAc-(pentapeptide)GlcNAc (lipid intermediate II). The sequence is that of UDP-N-acetylglucosamine--N-acetylmuramyl-(pentapeptide) pyrophosphoryl-undecaprenol N-acetylglucosamine transferase from Tropheryma whipplei (strain Twist) (Whipple's bacillus).